Here is a 500-residue protein sequence, read N- to C-terminus: Probable cytosol aminopeptidase (500 aa).

Residues Lys-265 and Asp-270 each coordinate Mn(2+). Lys-277 is an active-site residue. Mn(2+) contacts are provided by Asp-288, Asp-347, and Glu-349. Arg-351 is a catalytic residue.

Belongs to the peptidase M17 family. Requires Mn(2+) as cofactor.

It localises to the cytoplasm. The catalysed reaction is Release of an N-terminal amino acid, Xaa-|-Yaa-, in which Xaa is preferably Leu, but may be other amino acids including Pro although not Arg or Lys, and Yaa may be Pro. Amino acid amides and methyl esters are also readily hydrolyzed, but rates on arylamides are exceedingly low.. It carries out the reaction Release of an N-terminal amino acid, preferentially leucine, but not glutamic or aspartic acids.. Its function is as follows. Presumably involved in the processing and regular turnover of intracellular proteins. Catalyzes the removal of unsubstituted N-terminal amino acids from various peptides. This chain is Probable cytosol aminopeptidase, found in Corynebacterium diphtheriae (strain ATCC 700971 / NCTC 13129 / Biotype gravis).